Reading from the N-terminus, the 94-residue chain is MAKYSIIMEKKNKLFDRTEYIIQVEHPKEKTPTREEAKEKIAEMLNVDKNKLVIKKIVSKYGLPYSFIYARVYDNIDTAKRVELKQILRRNNLQ.

The protein belongs to the eukaryotic ribosomal protein eS24 family.

This Nanoarchaeum equitans (strain Kin4-M) protein is Small ribosomal subunit protein eS24.